The primary structure comprises 232 residues: Y-linked testis-specific protein 1 (232 aa).

The protein belongs to the SPIN/STSY family. In terms of tissue distribution, expressed in testis (at protein level).

This chain is Y-linked testis-specific protein 1 (Ssty1), found in Mus musculus (Mouse).